We begin with the raw amino-acid sequence, 590 residues long: Aspartate--tRNA ligase (590 aa).

Position 174 (Glu174) interacts with L-aspartate. The aspartate stretch occupies residues Gln198–Lys201. Position 220 (Arg220) interacts with L-aspartate. ATP-binding positions include Arg220–Glu222 and Gln229. His443 lines the L-aspartate pocket. An ATP-binding site is contributed by Glu484. Arg491 contacts L-aspartate. Position 536–539 (Gly536–Arg539) interacts with ATP.

It belongs to the class-II aminoacyl-tRNA synthetase family. Type 1 subfamily. As to quaternary structure, homodimer.

It is found in the cytoplasm. The enzyme catalyses tRNA(Asp) + L-aspartate + ATP = L-aspartyl-tRNA(Asp) + AMP + diphosphate. In terms of biological role, catalyzes the attachment of L-aspartate to tRNA(Asp) in a two-step reaction: L-aspartate is first activated by ATP to form Asp-AMP and then transferred to the acceptor end of tRNA(Asp). The protein is Aspartate--tRNA ligase of Lactococcus lactis subsp. lactis (strain IL1403) (Streptococcus lactis).